The sequence spans 302 residues: Sulfate adenylyltransferase subunit 2 (302 aa).

Belongs to the PAPS reductase family. CysD subfamily. As to quaternary structure, heterodimer composed of CysD, the smaller subunit, and CysN.

The catalysed reaction is sulfate + ATP + H(+) = adenosine 5'-phosphosulfate + diphosphate. Its pathway is sulfur metabolism; hydrogen sulfide biosynthesis; sulfite from sulfate: step 1/3. Functionally, with CysN forms the ATP sulfurylase (ATPS) that catalyzes the adenylation of sulfate producing adenosine 5'-phosphosulfate (APS) and diphosphate, the first enzymatic step in sulfur assimilation pathway. APS synthesis involves the formation of a high-energy phosphoric-sulfuric acid anhydride bond driven by GTP hydrolysis by CysN coupled to ATP hydrolysis by CysD. The polypeptide is Sulfate adenylyltransferase subunit 2 (Shigella boydii serotype 4 (strain Sb227)).